A 416-amino-acid chain; its full sequence is UDP-N-acetylglucosamine 1-carboxyvinyltransferase (416 aa).

22 to 23 (KN) is a binding site for phosphoenolpyruvate. Position 92 (R92) interacts with UDP-N-acetyl-alpha-D-glucosamine. C116 (proton donor) is an active-site residue. Residue C116 is modified to 2-(S-cysteinyl)pyruvic acid O-phosphothioketal. UDP-N-acetyl-alpha-D-glucosamine is bound by residues 121 to 125 (RPVDQ), D304, and I326.

The protein belongs to the EPSP synthase family. MurA subfamily.

It localises to the cytoplasm. It carries out the reaction phosphoenolpyruvate + UDP-N-acetyl-alpha-D-glucosamine = UDP-N-acetyl-3-O-(1-carboxyvinyl)-alpha-D-glucosamine + phosphate. It participates in cell wall biogenesis; peptidoglycan biosynthesis. Its function is as follows. Cell wall formation. Adds enolpyruvyl to UDP-N-acetylglucosamine. The chain is UDP-N-acetylglucosamine 1-carboxyvinyltransferase from Cupriavidus pinatubonensis (strain JMP 134 / LMG 1197) (Cupriavidus necator (strain JMP 134)).